Consider the following 281-residue polypeptide: Large ribosomal subunit protein uL2 (281 aa).

Residues 224 to 281 are disordered; sequence RGSAMNPNDHPHGGGEGHQPIGRKSPMTPWGKKALGVKTRKTKKASNQFIIRRRKESK.

It belongs to the universal ribosomal protein uL2 family. Part of the 50S ribosomal subunit. Forms a bridge to the 30S subunit in the 70S ribosome.

One of the primary rRNA binding proteins. Required for association of the 30S and 50S subunits to form the 70S ribosome, for tRNA binding and peptide bond formation. It has been suggested to have peptidyltransferase activity; this is somewhat controversial. Makes several contacts with the 16S rRNA in the 70S ribosome. In Metamycoplasma arthritidis (strain 158L3-1) (Mycoplasma arthritidis), this protein is Large ribosomal subunit protein uL2.